Consider the following 267-residue polypeptide: Undecaprenyl-diphosphatase (267 aa).

Helical transmembrane passes span 1 to 21 (MSYF…FLPI), 39 to 59 (QGLA…VIYF), 83 to 103 (AKLA…GLVM), 111 to 131 (LRSA…LWWV), 144 to 164 (AGWK…IPGT), 189 to 209 (FLMS…KLVT), 218 to 238 (FLLT…HLFL), and 246 to 266 (MTPF…YLLM).

This sequence belongs to the UppP family.

It localises to the cell inner membrane. It carries out the reaction di-trans,octa-cis-undecaprenyl diphosphate + H2O = di-trans,octa-cis-undecaprenyl phosphate + phosphate + H(+). In terms of biological role, catalyzes the dephosphorylation of undecaprenyl diphosphate (UPP). Confers resistance to bacitracin. The polypeptide is Undecaprenyl-diphosphatase (Vibrio vulnificus (strain CMCP6)).